Consider the following 1033-residue polypeptide: Complement receptor type 2 (1033 aa).

The first 20 residues, 1–20, serve as a signal peptide directing secretion; sequence MGAAGLLGVFLALVAPGVLG. Sushi domains follow at residues 21 to 84, 89 to 148, 152 to 212, 213 to 273, 274 to 344, 349 to 408, 409 to 468, 469 to 524, 525 to 595, 600 to 659, 660 to 716, 717 to 781, 786 to 845, 849 to 909, and 910 to 970; these read ISCG…KCEY, SSCP…TCVS, LECP…TCEE, ARCK…VCEE, IFCP…RCEL, VQCP…VCEK, ECQA…QCKV, AACE…LCKE, ITCP…LCKL, VQCS…VCEK, ETCQ…LCKV, IHCH…QCLR, TRCP…TCIK, IGCP…HCKE, and VNCS…VCRS. The Extracellular segment spans residues 21 to 971; it reads ISCGSPPPIL…NPPLAVCRSR (951 aa). 28 disulfides stabilise this stretch: C23/C65, C51/C82, C91/C132, C118/C146, C154/C197, C183/C210, C215/C256, C242/C271, C276/C325, C305/C342, C351/C393, C379/C406, C410/C453, C439/C466, C471/C509, C495/C522, C527/C576, C556/C593, C602/C644, C630/C657, C662/C699, C685/C714, C719/C762, C748/C779, C788/C830, C816/C843, C851/C894, and C880/C907. N121 and N127 each carry an N-linked (GlcNAc...) asparagine glycan. Residue N294 is glycosylated (N-linked (GlcNAc...) asparagine). N372 carries an N-linked (GlcNAc...) asparagine glycan. N-linked (GlcNAc...) asparagine glycosylation is present at N492. A glycan (N-linked (GlcNAc...) asparagine) is linked at N623. N-linked (GlcNAc...) asparagine glycosylation occurs at N682. N-linked (GlcNAc...) asparagine glycosylation is found at N800, N823, and N861. An N-linked (GlcNAc...) asparagine glycan is attached at N911. 2 disulfides stabilise this stretch: C912–C955 and C941–C968. A helical membrane pass occupies residues 972–999; sequence SLAPVLCGIAAGLILLTFLIVITLYVIS. Residues 1000–1033 lie on the Cytoplasmic side of the membrane; sequence KHRARNYYTDTSQKEAFHLEAREVYSVDPYNPAS.

It belongs to the receptors of complement activation (RCA) family. As to quaternary structure, interacts (via Sushi domain 1 and 2) with C3. Interacts with CD19. Part of a complex composed of CD19, CR2/CD21, CD81 and IFITM1/CD225 in the membrane of mature B-cells. Interacts (via Sushi domain 1 and 2) with FCER2 (via the C-terminus). Interacts with CD23. Interacts with FCRL5. Interacts with CR1. Interacts with INFNA1. In terms of assembly, (Microbial infection) Interacts with Epstein-Barr virus gp350 protein. In terms of tissue distribution, mature B-lymphocytes, T-lymphocytes, pharyngeal epithelial cells, astrocytes and follicular dendritic cells of the spleen.

It is found in the cell membrane. In terms of biological role, serves as a receptor for various ligands including complement component CD3d, HNRNPU OR IFNA1. When C3d is bound to antigens, attaches to C3d on B-cell surface and thereby facilitates the recognition and uptake of antigens by B-cells. This interaction enhances B-cell activation and subsequent immune responses. Forms a complex with several partners on the surface of B-cells including CD19, FCRL5 and CD81, to form the B-cell coreceptor complex that plays a crucial role in B-cell activation and signaling. Also induces specific intracellular signaling separately from the BCR and CD19 by activating the tyrosine kinase SRC, which then phosphorylates nucleolin/NCL and triggers AKT and GSK3 kinase activities in a SYK/CD19-independent manner. Acts as a ligand for CD23 (FcepsilonRII), a low-affinity receptor for IgE, which is expressed on B-cells and other immune cells, and thus participates in the regulation of IgE production. Its function is as follows. (Microbial infection) Acts as a receptor for Epstein-Barr virus. In Homo sapiens (Human), this protein is Complement receptor type 2 (CR2).